Consider the following 339-residue polypeptide: 4-hydroxythreonine-4-phosphate dehydrogenase (339 aa).

Substrate is bound by residues His141 and Thr142. The a divalent metal cation site is built by His171, His215, and His270. 3 residues coordinate substrate: Lys278, Asn287, and Arg296.

The protein belongs to the PdxA family. Homodimer. The cofactor is Zn(2+). It depends on Mg(2+) as a cofactor. Requires Co(2+) as cofactor.

Its subcellular location is the cytoplasm. It carries out the reaction 4-(phosphooxy)-L-threonine + NAD(+) = 3-amino-2-oxopropyl phosphate + CO2 + NADH. The protein operates within cofactor biosynthesis; pyridoxine 5'-phosphate biosynthesis; pyridoxine 5'-phosphate from D-erythrose 4-phosphate: step 4/5. In terms of biological role, catalyzes the NAD(P)-dependent oxidation of 4-(phosphooxy)-L-threonine (HTP) into 2-amino-3-oxo-4-(phosphooxy)butyric acid which spontaneously decarboxylates to form 3-amino-2-oxopropyl phosphate (AHAP). This chain is 4-hydroxythreonine-4-phosphate dehydrogenase, found in Geobacter metallireducens (strain ATCC 53774 / DSM 7210 / GS-15).